The sequence spans 216 residues: Probable nicotinate-nucleotide adenylyltransferase (216 aa).

Belongs to the NadD family.

The catalysed reaction is nicotinate beta-D-ribonucleotide + ATP + H(+) = deamido-NAD(+) + diphosphate. Its pathway is cofactor biosynthesis; NAD(+) biosynthesis; deamido-NAD(+) from nicotinate D-ribonucleotide: step 1/1. Its function is as follows. Catalyzes the reversible adenylation of nicotinate mononucleotide (NaMN) to nicotinic acid adenine dinucleotide (NaAD). This Klebsiella pneumoniae subsp. pneumoniae (strain ATCC 700721 / MGH 78578) protein is Probable nicotinate-nucleotide adenylyltransferase.